A 187-amino-acid polypeptide reads, in one-letter code: MDMQNENERLMVFEHARKVAEATYVKNPLDAENLTRWAGALLELSQFQTEPKQMILEAILKLGEALVIDPKKHDALWLIGNAHLSFGFLSSDQTEASDNFEKASQFFQLAVEEQPESELYRKSLTLASKAPELHTGGTAGPSSNSAKTMKQKKTSEFKYDVFGWVILASYVVAWISFANSQTPVSRQ.

An N-acetylmethionine modification is found at Met1. Residues 1-160 are Cytoplasmic-facing; it reads MDMQNENERL…QKKTSEFKYD (160 aa). One copy of the TPR repeat lies at 84-117; sequence LSFGFLSSDQTEASDNFEKASQFFQLAVEEQPES. Residues 161 to 178 traverse the membrane as a helical segment; sequence VFGWVILASYVVAWISFA. Over 179–187 the chain is Mitochondrial intermembrane; the sequence is NSQTPVSRQ. Residues 179 to 187 carry the AKR2A-binding sequence (ABS) required for mitochondrion outer membrane targeting motif; sequence NSQTPVSRQ.

The protein belongs to the Tom20 family. Forms part of the preprotein translocase complex of the outer mitochondrial membrane (TOM complex) which consists of at least 6 different proteins (TOM5, TOM6, TOM7, TOM20, TOM22/TOM9 and TOM40). Interacts with a variety of mitochondrial precursor proteins. Interacts with AKR2A. Component of a mitochondrial large protein complex that contains, at least, MIC60, DGS1, TOM40, TOM20 proteins, and petC/RISP. In terms of processing, the N-terminus is blocked. As to expression, expressed in roots, flowers, young cotyledons and leaves.

It localises to the mitochondrion outer membrane. In terms of biological role, central component of the receptor complex responsible for the recognition and translocation of cytosolically synthesized mitochondrial preproteins. Together with TOM22 functions as the transit peptide receptor at the surface of the mitochondrion outer membrane and facilitates the movement of preproteins into the translocation pore. This Arabidopsis thaliana (Mouse-ear cress) protein is Mitochondrial import receptor subunit TOM20-4.